The following is a 257-amino-acid chain: 1-(5-phosphoribosyl)-5-[(5-phosphoribosylamino)methylideneamino] imidazole-4-carboxamide isomerase (257 aa).

Aspartate 8 (proton acceptor) is an active-site residue. The active-site Proton donor is the aspartate 129.

Belongs to the HisA/HisF family.

The protein resides in the cytoplasm. It catalyses the reaction 1-(5-phospho-beta-D-ribosyl)-5-[(5-phospho-beta-D-ribosylamino)methylideneamino]imidazole-4-carboxamide = 5-[(5-phospho-1-deoxy-D-ribulos-1-ylimino)methylamino]-1-(5-phospho-beta-D-ribosyl)imidazole-4-carboxamide. The protein operates within amino-acid biosynthesis; L-histidine biosynthesis; L-histidine from 5-phospho-alpha-D-ribose 1-diphosphate: step 4/9. This Trichormus variabilis (strain ATCC 29413 / PCC 7937) (Anabaena variabilis) protein is 1-(5-phosphoribosyl)-5-[(5-phosphoribosylamino)methylideneamino] imidazole-4-carboxamide isomerase.